Reading from the N-terminus, the 244-residue chain is UPF0246 protein SGO_1307 (244 aa).

This sequence belongs to the UPF0246 family.

This Streptococcus gordonii (strain Challis / ATCC 35105 / BCRC 15272 / CH1 / DL1 / V288) protein is UPF0246 protein SGO_1307.